Here is a 92-residue protein sequence, read N- to C-terminus: Sec-independent protein translocase protein TatA (92 aa).

A helical transmembrane segment spans residues 1–21; it reads MGIFDWKHWIVILVVVVLVFG. The segment at 44–92 is disordered; sequence NDDEKPADPVVNPVPPAQPVHPQATQPITERRTFDVQAEKVEEPTRKDS. The segment covering 72–92 has biased composition (basic and acidic residues); the sequence is TERRTFDVQAEKVEEPTRKDS.

The protein belongs to the TatA/E family. As to quaternary structure, the Tat system comprises two distinct complexes: a TatABC complex, containing multiple copies of TatA, TatB and TatC subunits, and a separate TatA complex, containing only TatA subunits. Substrates initially bind to the TatABC complex, which probably triggers association of the separate TatA complex to form the active translocon.

It is found in the cell inner membrane. Part of the twin-arginine translocation (Tat) system that transports large folded proteins containing a characteristic twin-arginine motif in their signal peptide across membranes. TatA could form the protein-conducting channel of the Tat system. This chain is Sec-independent protein translocase protein TatA, found in Pseudomonas fluorescens (strain SBW25).